We begin with the raw amino-acid sequence, 152 residues long: Deoxyuridine 5'-triphosphate nucleotidohydrolase (152 aa).

Substrate-binding positions include 71–73 (RSG), Asn84, 88–90 (LID), and Met98.

This sequence belongs to the dUTPase family. Mg(2+) is required as a cofactor.

The catalysed reaction is dUTP + H2O = dUMP + diphosphate + H(+). It participates in pyrimidine metabolism; dUMP biosynthesis; dUMP from dCTP (dUTP route): step 2/2. This enzyme is involved in nucleotide metabolism: it produces dUMP, the immediate precursor of thymidine nucleotides and it decreases the intracellular concentration of dUTP so that uracil cannot be incorporated into DNA. This Shewanella baltica (strain OS185) protein is Deoxyuridine 5'-triphosphate nucleotidohydrolase.